A 545-amino-acid chain; its full sequence is Sterol O-acyltransferase 1 (545 aa).

N-acetylmethionine is present on methionine 1. Residues 1 to 24 are disordered; the sequence is MVGEETSLRNRLSRSAENPEQDEA. The Cytoplasmic portion of the chain corresponds to 1-133; the sequence is MVGEETSLRN…LDELFEVDHI (133 aa). Phosphoserine is present on serine 7. The segment covering 9–18 has biased composition (polar residues); the sequence is RNRLSRSAEN. Residue histidine 132 coordinates cholesterol. A helical membrane pass occupies residues 134-155; it reads RTIYHMFIALLIIFILSTLVVD. The Lumenal portion of the chain corresponds to 156 to 175; the sequence is YIDEGRLVLEFSLLAYAFGQ. A helical transmembrane segment spans residues 176 to 201; it reads FPIVIWTWWAMFLSTLAIPYFLFQRW. Over 202–213 the chain is Cytoplasmic; the sequence is AHGYSKSSHPLI. Residues 214–239 form a helical membrane-spanning segment; it reads YSLIHGAFFLVFQLGILGFIPTYVVL. Residues 240 to 247 lie on the Lumenal side of the membrane; that stretch reads AYTLPPAS. Residues 248 to 271 traverse the membrane as a helical segment; the sequence is RFILILEQIRLVMKAHSYVRENVP. Over 272 to 314 the chain is Cytoplasmic; sequence RVLSAAKEKSSTVPVPTVNQYLYFLFAPTLIYRDSYPRTPTVR. The helical transmembrane segment at 315–347 threads the bilayer; that stretch reads WGYVAMQFLQVFGCLFYVYYIFERLCAPLFRNI. At 348-364 the chain is on the lumenal side; sequence KQEPFSARVLVLCVFNS. Residues 365-390 traverse the membrane as a helical segment; it reads ILPGVLMLFLSFFAFLHCWLNAFAEM. Residues 391–438 are Cytoplasmic-facing; that stretch reads LRFGDRMFYKDWWNSTSYSNYYRTWNVVVHDWLYYYVYKDLLWFFSKR. Residues 398–404 carry the FYXDWWN motif motif; it reads FYKDWWN. The an acyl-CoA site is built by asparagine 410, arginine 413, asparagine 416, histidine 420, tyrosine 428, and serine 451. A helical membrane pass occupies residues 439–463; the sequence is FRPAAMLAVFALSAVVHEYALAVCL. Residue histidine 455 is part of the active site. At 464 to 469 the chain is on the lumenal side; the sequence is SYFYPV. A helical membrane pass occupies residues 470–485; it reads LFVLFMFFGMAFNFIV. The Cytoplasmic portion of the chain corresponds to 486 to 491; that stretch reads NDSRKR. A helical membrane pass occupies residues 492–523; that stretch reads PVWNIMVRASLFLGHGVILCFYSQEWYARQRC. A disulfide bridge connects residues cysteine 523 and cysteine 541. The Lumenal portion of the chain corresponds to 524 to 545; it reads PLKNPTFLDYVRPRTWTCRYVF.

It belongs to the membrane-bound acyltransferase family. Sterol o-acyltransferase subfamily. As to quaternary structure, may form homo- or heterodimers. Interacts with UBIAD1.

It localises to the endoplasmic reticulum membrane. It catalyses the reaction a sterol + a long-chain fatty acyl-CoA = a long-chain 3-hydroxysterol ester + CoA. It carries out the reaction cholesterol + an acyl-CoA = a cholesterol ester + CoA. The enzyme catalyses cholesterol + (9Z)-octadecenoyl-CoA = cholesteryl (9Z-octadecenoate) + CoA. The catalysed reaction is cholesterol + hexadecanoyl-CoA = cholesteryl hexadecanoate + CoA. It catalyses the reaction octadecanoyl-CoA + cholesterol = cholesteryl octadecanoate + CoA. It carries out the reaction (9Z,12Z)-octadecadienoyl-CoA + cholesterol = cholesteryl (9Z,12Z)-octadecadienoate + CoA. The enzyme catalyses (5Z,8Z,11Z,14Z)-eicosatetraenoyl-CoA + cholesterol = cholesteryl (5Z,8Z,11Z,14Z)-eicosatetraenoate + CoA. The catalysed reaction is (9Z)-hexadecenoyl-CoA + cholesterol = cholesteryl (9Z)-hexadecenoate + CoA. It catalyses the reaction (11Z)-octadecenoyl-CoA + cholesterol = cholesteryl (11Z)-octadecenoate + CoA. It carries out the reaction (7Z)-octadecenoyl-CoA + cholesterol = cholesteryl (7Z)-octadecenoate + CoA. In terms of biological role, catalyzes the formation of fatty acid-cholesterol esters, which are less soluble in membranes than cholesterol. Plays a role in lipoprotein assembly and dietary cholesterol absorption. Preferentially utilizes oleoyl-CoA ((9Z)-octadecenoyl-CoA) as substrate: shows a higher activity towards an acyl-CoA substrate with a double bond at the delta-9 position (9Z) than towards saturated acyl-CoA or an unsaturated acyl-CoA with a double bond at the delta-7 (7Z) or delta-11 (11Z) positions. The chain is Sterol O-acyltransferase 1 from Rattus norvegicus (Rat).